The sequence spans 475 residues: Aspartyl/glutamyl-tRNA(Asn/Gln) amidotransferase subunit B (475 aa).

It belongs to the GatB/GatE family. GatB subfamily. In terms of assembly, heterotrimer of A, B and C subunits.

The catalysed reaction is L-glutamyl-tRNA(Gln) + L-glutamine + ATP + H2O = L-glutaminyl-tRNA(Gln) + L-glutamate + ADP + phosphate + H(+). It carries out the reaction L-aspartyl-tRNA(Asn) + L-glutamine + ATP + H2O = L-asparaginyl-tRNA(Asn) + L-glutamate + ADP + phosphate + 2 H(+). Functionally, allows the formation of correctly charged Asn-tRNA(Asn) or Gln-tRNA(Gln) through the transamidation of misacylated Asp-tRNA(Asn) or Glu-tRNA(Gln) in organisms which lack either or both of asparaginyl-tRNA or glutaminyl-tRNA synthetases. The reaction takes place in the presence of glutamine and ATP through an activated phospho-Asp-tRNA(Asn) or phospho-Glu-tRNA(Gln). In Helicobacter pylori (strain HPAG1), this protein is Aspartyl/glutamyl-tRNA(Asn/Gln) amidotransferase subunit B.